Reading from the N-terminus, the 1269-residue chain is Furin-like protease 1, isoforms 1/1-X/2 (1269 aa).

The tract at residues 1–57 (MKNDVVRWSRQPTSNTTNSSSSSRSDSNSTHKHRSKSNKLNARQLGSNAARSCQQRS) is disordered. The segment covering 13–28 (TSNTTNSSSSSRSDSN) has biased composition (low complexity). Residues Asn15, Asn18, and Asn28 are each glycosylated (N-linked (GlcNAc...) asparagine). Over residues 38–57 (NKLNARQLGSNAARSCQQRS) the composition is skewed to polar residues. A glycan (N-linked (GlcNAc...) asparagine) is linked at Asn108. Residues 119–139 (VFLLALQFSAVVFLCNINVGF) traverse the membrane as a helical segment. The span at 150–163 (SAGGSSPAAPSSAP) shows a compositional bias: low complexity. The disordered stretch occupies residues 150–187 (SAGGSSPAAPSSAPSSPPTVAVPPPPPPSSALKVDPNG). Residues 164-178 (SSPPTVAVPPPPPPS) are compositionally biased toward pro residues. An N-linked (GlcNAc...) asparagine glycan is attached at Asn333. One can recognise a Peptidase S8 domain in the interval 340–654 (MWYLNRGGGL…YGLMDAAEMV (315 aa)). Residues Asp372 and His413 each act as charge relay system in the active site. Asn426 carries an N-linked (GlcNAc...) asparagine glycan. Intrachain disulfides connect Cys430–Cys579 and Cys522–Cys552. The active-site Charge relay system is the Ser587. A glycan (N-linked (GlcNAc...) asparagine) is linked at Asn606. The P/Homo B domain occupies 662–793 (AVPEQQRCEI…SLIFYGTTQS (132 aa)). A disulfide bridge links Cys669 with Cys695. N-linked (GlcNAc...) asparagine glycosylation is found at Asn727 and Asn814. Disordered stretches follow at residues 796–875 (PNDP…PPKQ), 891–1015 (ANGK…NSRI), 1031–1050 (ELEP…AKQG), and 1057–1083 (LFKP…PSQT). 2 stretches are compositionally biased toward low complexity: residues 811–821 (TTPNSSSTTSN) and 835–851 (PNNF…LPLG). The N-linked (GlcNAc...) asparagine glycan is linked to Asn857. The span at 858–868 (KSSYVTNNPLL) shows a compositional bias: polar residues. 2 N-linked (GlcNAc...) asparagine glycosylation sites follow: Asn897 and Asn908. Low complexity-rich tracts occupy residues 905–915 (NKGNKSNNGNK) and 929–940 (TTQSTIIQTSTS). Basic and acidic residues predominate over residues 975 to 985 (KSYDEKSRKVV). Asn994 carries an N-linked (GlcNAc...) asparagine glycan. Positions 1005-1014 (ESTTTSSNSR) are enriched in polar residues. Positions 1062-1074 (NGGNSRQGNTKKS) are enriched in polar residues. The chain crosses the membrane as a helical span at residues 1233-1253 (LGLSLLFFMIMQVFFLNFKHA).

This sequence belongs to the peptidase S8 family. Furin subfamily. Ca(2+) is required as a cofactor. In terms of tissue distribution, in adults, isoform 1-X is expressed in CNS, fat body and female reproductive tissues, and in embryos, in CNS, tracheal pits, hindgut, posterior spiracles and anal pads.

Its subcellular location is the golgi apparatus membrane. It catalyses the reaction Release of mature proteins from their proproteins by cleavage of -Arg-Xaa-Yaa-Arg-|-Zaa- bonds, where Xaa can be any amino acid and Yaa is Arg or Lys. Releases albumin, complement component C3 and von Willebrand factor from their respective precursors.. Its function is as follows. Furin is likely to represent the ubiquitous endoprotease activity within constitutive secretory pathways and capable of cleavage at the RX(K/R)R consensus motif. This Drosophila melanogaster (Fruit fly) protein is Furin-like protease 1, isoforms 1/1-X/2 (Fur1).